A 455-amino-acid chain; its full sequence is Bifunctional protein GlmU (455 aa).

Positions M1–G229 are pyrophosphorylase. UDP-N-acetyl-alpha-D-glucosamine contacts are provided by residues L11 to G14, K25, Q76, G81 to T82, Y103 to D105, G140, E154, N169, and N227. D105 provides a ligand contact to Mg(2+). Residue N227 participates in Mg(2+) binding. Positions L230–S250 are linker. Positions G251–T455 are N-acetyltransferase. UDP-N-acetyl-alpha-D-glucosamine contacts are provided by R333 and K351. Catalysis depends on H363, which acts as the Proton acceptor. Positions 366 and 377 each coordinate UDP-N-acetyl-alpha-D-glucosamine. Acetyl-CoA-binding positions include A380, N386–Y387, S405, A423, and R440.

This sequence in the N-terminal section; belongs to the N-acetylglucosamine-1-phosphate uridyltransferase family. It in the C-terminal section; belongs to the transferase hexapeptide repeat family. In terms of assembly, homotrimer. It depends on Mg(2+) as a cofactor.

The protein localises to the cytoplasm. The catalysed reaction is alpha-D-glucosamine 1-phosphate + acetyl-CoA = N-acetyl-alpha-D-glucosamine 1-phosphate + CoA + H(+). It catalyses the reaction N-acetyl-alpha-D-glucosamine 1-phosphate + UTP + H(+) = UDP-N-acetyl-alpha-D-glucosamine + diphosphate. It participates in nucleotide-sugar biosynthesis; UDP-N-acetyl-alpha-D-glucosamine biosynthesis; N-acetyl-alpha-D-glucosamine 1-phosphate from alpha-D-glucosamine 6-phosphate (route II): step 2/2. The protein operates within nucleotide-sugar biosynthesis; UDP-N-acetyl-alpha-D-glucosamine biosynthesis; UDP-N-acetyl-alpha-D-glucosamine from N-acetyl-alpha-D-glucosamine 1-phosphate: step 1/1. Its pathway is bacterial outer membrane biogenesis; LPS lipid A biosynthesis. Its function is as follows. Catalyzes the last two sequential reactions in the de novo biosynthetic pathway for UDP-N-acetylglucosamine (UDP-GlcNAc). The C-terminal domain catalyzes the transfer of acetyl group from acetyl coenzyme A to glucosamine-1-phosphate (GlcN-1-P) to produce N-acetylglucosamine-1-phosphate (GlcNAc-1-P), which is converted into UDP-GlcNAc by the transfer of uridine 5-monophosphate (from uridine 5-triphosphate), a reaction catalyzed by the N-terminal domain. This is Bifunctional protein GlmU from Hamiltonella defensa subsp. Acyrthosiphon pisum (strain 5AT).